Here is a 407-residue protein sequence, read N- to C-terminus: Argininosuccinate synthase (407 aa).

Residues 12-20 (AFSGGLDTS) and Ala39 each bind ATP. L-citrulline-binding residues include Tyr90 and Ser95. Residue Gly120 coordinates ATP. Residues Thr122, Asn126, and Asp127 each coordinate L-aspartate. Asn126 lines the L-citrulline pocket. Arg130, Ser181, Ser190, Glu266, and Tyr278 together coordinate L-citrulline.

It belongs to the argininosuccinate synthase family. Type 1 subfamily. Homotetramer.

It is found in the cytoplasm. It catalyses the reaction L-citrulline + L-aspartate + ATP = 2-(N(omega)-L-arginino)succinate + AMP + diphosphate + H(+). Its pathway is amino-acid biosynthesis; L-arginine biosynthesis; L-arginine from L-ornithine and carbamoyl phosphate: step 2/3. This Nitrosospira multiformis (strain ATCC 25196 / NCIMB 11849 / C 71) protein is Argininosuccinate synthase.